The following is a 200-amino-acid chain: Dephospho-CoA kinase (200 aa).

The region spanning 4-200 is the DPCK domain; sequence TIGLTGSVAT…TFIERFVNNK (197 aa). 12–17 provides a ligand contact to ATP; that stretch reads ATGKST.

This sequence belongs to the CoaE family.

It localises to the cytoplasm. It catalyses the reaction 3'-dephospho-CoA + ATP = ADP + CoA + H(+). It functions in the pathway cofactor biosynthesis; coenzyme A biosynthesis; CoA from (R)-pantothenate: step 5/5. Its function is as follows. Catalyzes the phosphorylation of the 3'-hydroxyl group of dephosphocoenzyme A to form coenzyme A. The protein is Dephospho-CoA kinase of Listeria innocua serovar 6a (strain ATCC BAA-680 / CLIP 11262).